A 483-amino-acid polypeptide reads, in one-letter code: Aspartyl/glutamyl-tRNA(Asn/Gln) amidotransferase subunit B (483 aa).

The protein belongs to the GatB/GatE family. GatB subfamily. In terms of assembly, heterotrimer of A, B and C subunits.

The catalysed reaction is L-glutamyl-tRNA(Gln) + L-glutamine + ATP + H2O = L-glutaminyl-tRNA(Gln) + L-glutamate + ADP + phosphate + H(+). It catalyses the reaction L-aspartyl-tRNA(Asn) + L-glutamine + ATP + H2O = L-asparaginyl-tRNA(Asn) + L-glutamate + ADP + phosphate + 2 H(+). In terms of biological role, allows the formation of correctly charged Asn-tRNA(Asn) or Gln-tRNA(Gln) through the transamidation of misacylated Asp-tRNA(Asn) or Glu-tRNA(Gln) in organisms which lack either or both of asparaginyl-tRNA or glutaminyl-tRNA synthetases. The reaction takes place in the presence of glutamine and ATP through an activated phospho-Asp-tRNA(Asn) or phospho-Glu-tRNA(Gln). This chain is Aspartyl/glutamyl-tRNA(Asn/Gln) amidotransferase subunit B, found in Thermomicrobium roseum (strain ATCC 27502 / DSM 5159 / P-2).